A 556-amino-acid chain; its full sequence is M-phase inducer phosphatase (556 aa).

Disordered stretches follow at residues 165 to 186 and 257 to 297; these read STDG…QERR and TSGL…RPRK. The span at 287–297 shows a compositional bias: basic residues; that stretch reads KSAHPNMRPRK. Residues 371-474 enclose the Rhodanese domain; it reads MFDNIMIIDC…FFAEHRSLCY (104 aa). Cys-421 is an active-site residue. A compositionally biased stretch (polar residues) spans 505 to 516; it reads RAQTFAFGQQSP. The tract at residues 505-556 is disordered; it reads RAQTFAFGQQSPEMEDSPTGRCRNNPGDRKLLASPFNDSPGSRFPGRRMLSY.

It belongs to the MPI phosphatase family.

It carries out the reaction O-phospho-L-tyrosyl-[protein] + H2O = L-tyrosyl-[protein] + phosphate. Its function is as follows. This protein functions as a dosage-dependent inducer in mitotic control. It is a tyrosine protein phosphatase required for progression of the cell cycle. It may directly dephosphorylate p34(cdc2) and activate the p34(cdc2) kinase activity. The polypeptide is M-phase inducer phosphatase (nimT) (Emericella nidulans (strain FGSC A4 / ATCC 38163 / CBS 112.46 / NRRL 194 / M139) (Aspergillus nidulans)).